Here is a 650-residue protein sequence, read N- to C-terminus: Acetyl-coenzyme A synthetase (650 aa).

CoA is bound by residues 191–194 (RGGR), threonine 311, and asparagine 335. Residues 387-389 (GEP), 411-416 (DTWWQT), aspartate 500, and arginine 515 each bind ATP. Serine 523 provides a ligand contact to CoA. Arginine 526 contributes to the ATP binding site. The Mg(2+) site is built by valine 537, histidine 539, and valine 542. Residue arginine 584 participates in CoA binding. At lysine 609 the chain carries N6-acetyllysine.

It belongs to the ATP-dependent AMP-binding enzyme family. Mg(2+) serves as cofactor. In terms of processing, acetylated. Deacetylation by the SIR2-homolog deacetylase activates the enzyme.

The catalysed reaction is acetate + ATP + CoA = acetyl-CoA + AMP + diphosphate. Functionally, catalyzes the conversion of acetate into acetyl-CoA (AcCoA), an essential intermediate at the junction of anabolic and catabolic pathways. AcsA undergoes a two-step reaction. In the first half reaction, AcsA combines acetate with ATP to form acetyl-adenylate (AcAMP) intermediate. In the second half reaction, it can then transfer the acetyl group from AcAMP to the sulfhydryl group of CoA, forming the product AcCoA. This chain is Acetyl-coenzyme A synthetase, found in Shewanella baltica (strain OS155 / ATCC BAA-1091).